The following is a 418-amino-acid chain: Glutamyl-tRNA reductase (418 aa).

Substrate contacts are provided by residues 49–52 (TCNR), S109, 114–116 (EPQ), and Q120. Residue C50 is the Nucleophile of the active site. 189–194 (GAGETI) is a binding site for NADP(+).

Belongs to the glutamyl-tRNA reductase family. In terms of assembly, homodimer.

It catalyses the reaction (S)-4-amino-5-oxopentanoate + tRNA(Glu) + NADP(+) = L-glutamyl-tRNA(Glu) + NADPH + H(+). The protein operates within porphyrin-containing compound metabolism; protoporphyrin-IX biosynthesis; 5-aminolevulinate from L-glutamyl-tRNA(Glu): step 1/2. Catalyzes the NADPH-dependent reduction of glutamyl-tRNA(Glu) to glutamate 1-semialdehyde (GSA). The sequence is that of Glutamyl-tRNA reductase from Cronobacter sakazakii (strain ATCC BAA-894) (Enterobacter sakazakii).